Consider the following 660-residue polypeptide: Bifunctional polymyxin resistance protein ArnA (660 aa).

A formyltransferase ArnAFT region spans residues 1–304 (MKAVIFAYHD…TLGLVAGARL (304 aa)). The Proton donor; for formyltransferase activity role is filled by His104. Residues Arg114 and 136-140 (VKRAD) contribute to the (6R)-10-formyltetrahydrofolate site. Residues 314-660 (RRIRVLILGV…RSVDVAERAS (347 aa)) are dehydrogenase ArnADH. Residues Asp347 and 368–369 (DI) contribute to the NAD(+) site. UDP-alpha-D-glucuronate contacts are provided by residues Ala393, Tyr398, and 432–433 (TS). The Proton acceptor; for decarboxylase activity role is filled by Glu434. UDP-alpha-D-glucuronate contacts are provided by residues Arg460, Asn492, 526–535 (KLIDGGQQKR), and Tyr613. The Proton donor; for decarboxylase activity role is filled by Arg619.

It in the N-terminal section; belongs to the Fmt family. UDP-L-Ara4N formyltransferase subfamily. In the C-terminal section; belongs to the NAD(P)-dependent epimerase/dehydratase family. UDP-glucuronic acid decarboxylase subfamily. In terms of assembly, homohexamer, formed by a dimer of trimers.

The enzyme catalyses UDP-alpha-D-glucuronate + NAD(+) = UDP-beta-L-threo-pentopyranos-4-ulose + CO2 + NADH. It catalyses the reaction UDP-4-amino-4-deoxy-beta-L-arabinose + (6R)-10-formyltetrahydrofolate = UDP-4-deoxy-4-formamido-beta-L-arabinose + (6S)-5,6,7,8-tetrahydrofolate + H(+). It participates in nucleotide-sugar biosynthesis; UDP-4-deoxy-4-formamido-beta-L-arabinose biosynthesis; UDP-4-deoxy-4-formamido-beta-L-arabinose from UDP-alpha-D-glucuronate: step 1/3. The protein operates within nucleotide-sugar biosynthesis; UDP-4-deoxy-4-formamido-beta-L-arabinose biosynthesis; UDP-4-deoxy-4-formamido-beta-L-arabinose from UDP-alpha-D-glucuronate: step 3/3. Its pathway is bacterial outer membrane biogenesis; lipopolysaccharide biosynthesis. In terms of biological role, bifunctional enzyme that catalyzes the oxidative decarboxylation of UDP-glucuronic acid (UDP-GlcUA) to UDP-4-keto-arabinose (UDP-Ara4O) and the addition of a formyl group to UDP-4-amino-4-deoxy-L-arabinose (UDP-L-Ara4N) to form UDP-L-4-formamido-arabinose (UDP-L-Ara4FN). The modified arabinose is attached to lipid A and is required for resistance to polymyxin and cationic antimicrobial peptides. The polypeptide is Bifunctional polymyxin resistance protein ArnA (Salmonella dublin (strain CT_02021853)).